A 109-amino-acid polypeptide reads, in one-letter code: uncharacterized protein (109 aa).

The protein resides in the mitochondrion. This is an uncharacterized protein from Marchantia polymorpha (Common liverwort).